Here is a 437-residue protein sequence, read N- to C-terminus: Phosphomethylpyrimidine synthase (437 aa).

Residues N69, M98, Y127, H163, 185 to 187, 226 to 229, and E265 each bind substrate; these read SRG and DACR. Zn(2+) is bound at residue H269. Y292 contributes to the substrate binding site. H333 is a binding site for Zn(2+). Positions 409, 412, and 416 each coordinate [4Fe-4S] cluster.

This sequence belongs to the ThiC family. [4Fe-4S] cluster is required as a cofactor.

It catalyses the reaction 5-amino-1-(5-phospho-beta-D-ribosyl)imidazole + S-adenosyl-L-methionine = 4-amino-2-methyl-5-(phosphooxymethyl)pyrimidine + CO + 5'-deoxyadenosine + formate + L-methionine + 3 H(+). It participates in cofactor biosynthesis; thiamine diphosphate biosynthesis. In terms of biological role, catalyzes the synthesis of the hydroxymethylpyrimidine phosphate (HMP-P) moiety of thiamine from aminoimidazole ribotide (AIR) in a radical S-adenosyl-L-methionine (SAM)-dependent reaction. In Clostridium botulinum (strain ATCC 19397 / Type A), this protein is Phosphomethylpyrimidine synthase.